A 425-amino-acid chain; its full sequence is Ribosome biogenesis protein WDR12 homolog (425 aa).

Positions 7 to 93 (IQAKFFTKDE…ETIVHLEYLE (87 aa)) are ubiquitin-like (UBL) domain. 7 WD repeats span residues 105-142 (IHDD…RRLT), 145-187 (GHLG…NAVE), 194-233 (GHAR…TDTD), 265-303 (GHHE…MKSQ), 305-344 (AGSK…GTIV), 350-390 (SHAG…APLY), and 394-425 (GHED…FEHK). The disordered stretch occupies residues 227–253 (PDSTDTDHGQDGSEEGSRKKQKTVDGK). Over residues 231–253 (DTDHGQDGSEEGSRKKQKTVDGK) the composition is skewed to basic and acidic residues.

It belongs to the WD repeat WDR12/YTM1 family.

It is found in the nucleus. It localises to the nucleolus. The protein resides in the nucleoplasm. Functionally, required for maturation of ribosomal RNAs and formation of the large ribosomal subunit. This chain is Ribosome biogenesis protein WDR12 homolog, found in Ixodes scapularis (Black-legged tick).